A 243-amino-acid polypeptide reads, in one-letter code: UPF0246 protein gbs2036 (243 aa).

This sequence belongs to the UPF0246 family.

The sequence is that of UPF0246 protein gbs2036 from Streptococcus agalactiae serotype III (strain NEM316).